The chain runs to 704 residues: Fatty acid oxidation complex subunit alpha (704 aa).

The enoyl-CoA hydratase stretch occupies residues 1–190 (MSEQKAFSLK…KLGVVDACVP (190 aa)). Positions 308–704 (TAVNKVGVLG…RAGEGRNFYD (397 aa)) are 3-hydroxyacyl-CoA dehydrogenase.

The protein in the N-terminal section; belongs to the enoyl-CoA hydratase/isomerase family. This sequence in the central section; belongs to the 3-hydroxyacyl-CoA dehydrogenase family. As to quaternary structure, heterotetramer of two alpha chains (FadJ) and two beta chains (FadI).

It localises to the cytoplasm. It carries out the reaction a (3S)-3-hydroxyacyl-CoA = a (2E)-enoyl-CoA + H2O. It catalyses the reaction a 4-saturated-(3S)-3-hydroxyacyl-CoA = a (3E)-enoyl-CoA + H2O. The enzyme catalyses a (3S)-3-hydroxyacyl-CoA + NAD(+) = a 3-oxoacyl-CoA + NADH + H(+). The catalysed reaction is (3S)-3-hydroxybutanoyl-CoA = (3R)-3-hydroxybutanoyl-CoA. The protein operates within lipid metabolism; fatty acid beta-oxidation. Catalyzes the formation of a hydroxyacyl-CoA by addition of water on enoyl-CoA. Also exhibits 3-hydroxyacyl-CoA epimerase and 3-hydroxyacyl-CoA dehydrogenase activities. In Vibrio campbellii (strain ATCC BAA-1116), this protein is Fatty acid oxidation complex subunit alpha.